Consider the following 600-residue polypeptide: Long-chain-fatty-acid--CoA ligase FadD15 (600 aa).

Belongs to the ATP-dependent AMP-binding enzyme family.

The catalysed reaction is a long-chain fatty acid + ATP + CoA = a long-chain fatty acyl-CoA + AMP + diphosphate. It functions in the pathway lipid metabolism; fatty acid biosynthesis. Catalyzes the activation of long-chain fatty acids as acyl-coenzyme A (acyl-CoA), which are then transferred to the multifunctional polyketide synthase (PKS) type III for further chain extension. This Mycobacterium bovis (strain ATCC BAA-935 / AF2122/97) protein is Long-chain-fatty-acid--CoA ligase FadD15 (fadD15).